The following is a 233-amino-acid chain: Forkhead box protein L3 (233 aa).

A DNA-binding region (fork-head) is located at residues 32-130; that stretch reads RPAYSYIALI…ENGNYRRRRR (99 aa). Over residues 125-134 the composition is skewed to basic residues; it reads YRRRRRRRGP. A disordered region spans residues 125–198; the sequence is YRRRRRRRGP…PRDLKFSIDY (74 aa). Pro residues predominate over residues 175–184; sequence REPPASPAPP. The span at 185-194 shows a compositional bias: basic and acidic residues; it reads GKEHPRDLKF.

It localises to the nucleus. In terms of biological role, probable transcriptional regulator. This chain is Forkhead box protein L3, found in Homo sapiens (Human).